Reading from the N-terminus, the 103-residue chain is Regulator of rDNA transcription protein 1 (103 aa).

The next 2 membrane-spanning stretches (helical) occupy residues 9–33 and 40–57; these read FLPSILIGYISIRVSLLVWVNWVLV and VAFIFSLWYFILSIYTFF.

It localises to the membrane. Its function is as follows. Identified in a screen for mutants with decreased levels of rDNA transcription. The protein is Regulator of rDNA transcription protein 1 (RRT1) of Saccharomyces cerevisiae (strain ATCC 204508 / S288c) (Baker's yeast).